The sequence spans 46 residues: Protein krueppel (46 aa).

3 consecutive C2H2-type zinc fingers follow at residues Met-1–His-4, Tyr-10–His-32, and Tyr-38–Arg-46.

Belongs to the krueppel C2H2-type zinc-finger protein family.

The protein localises to the nucleus. Its function is as follows. Krueppel is a gap class segmentation protein. The polypeptide is Protein krueppel (Kr) (Pholcus phalangioides (Longbodied cellar spider)).